The following is a 306-amino-acid chain: GTPase IMAP family member 1 (306 aa).

The tract at residues 1-21 (MGGRKMATDEENVYGLEENAQ) is disordered. Topologically, residues 1–272 (MGGRKMATDE…RLWKWLKSPR (272 aa)) are cytoplasmic. Residues 25-229 (ESTRRLILVG…YSNEVYELAQ (205 aa)) form the AIG1-type G domain. Positions 34-41 (GRTGAGKS) are G1. GTP-binding positions include 34–42 (GRTGAGKSA) and Ser55. The tract at residues 61 to 65 (SVTRA) is G2. Positions 82–85 (DTPD) are G3. The tract at residues 152–155 (TRKE) is G4. Residues 153–155 (RKE) and Asn190 each bind GTP. Positions 189–191 (DNR) are G5. The helical; Anchor for type IV membrane protein transmembrane segment at 273–292 (SWRLGLALLLGGALLFWVLL) threads the bilayer. Residues 293-306 (HRRWSEAVAEVGPD) lie on the Lumenal side of the membrane.

This sequence belongs to the TRAFAC class TrmE-Era-EngA-EngB-Septin-like GTPase superfamily. AIG1/Toc34/Toc159-like paraseptin GTPase family. IAN subfamily. As to expression, predominantly expressed in the spleen and to a lesser extent in the lymph nodes. Detected in T-cells.

The protein resides in the endoplasmic reticulum membrane. It localises to the golgi apparatus membrane. May regulate lymphocyte survival. Required for normal levels of mature T-lymphocytes and mature B-cells. This chain is GTPase IMAP family member 1 (GIMAP1), found in Homo sapiens (Human).